We begin with the raw amino-acid sequence, 84 residues long: uncharacterized protein (84 aa).

Over residues methionine 1–asparagine 14 the composition is skewed to low complexity. The tract at residues methionine 1–glutamate 84 is disordered. Gly residues predominate over residues serine 28–phenylalanine 40. Composition is skewed to basic and acidic residues over residues aspartate 53–threonine 65 and lysine 73–glutamate 84.

This is an uncharacterized protein from Schizosaccharomyces pombe (strain 972 / ATCC 24843) (Fission yeast).